Here is a 134-residue protein sequence, read N- to C-terminus: Retinoid-binding protein 7 (134 aa).

The protein belongs to the calycin superfamily. Fatty-acid binding protein (FABP) family. Expressed primarily in kidney, heart and transverse colon. Detected in adult lymph node, appendix, ascending colon, and in fetal heart and spleen.

Its subcellular location is the cytoplasm. Intracellular transport of retinol. This Homo sapiens (Human) protein is Retinoid-binding protein 7 (RBP7).